The sequence spans 181 residues: Sporozoite-associated mosquito saliva protein 1 (181 aa).

The N-terminal stretch at 1–24 (MNSSWRVVVFLGLVILCHSRRARA) is a signal peptide.

As to expression, salivary gland (at protein level). (Microbial infection) Detected with Plasmodium berghei sporozoites isolated from the saliva of infected Anopheles gambiae mosquitoes (at protein level).

The protein resides in the secreted. Its function is as follows. Decreases host neutrophil chemotaxis induced by N-formylmethionine-leucyl-phenylalanine (fMLP). (Microbial infection) Interacts with the surface of Plasmodium berghei sporozoites. Enhances sporozoite gliding activity. Enhances host hepatocyte traversal by sporozoites. This chain is Sporozoite-associated mosquito saliva protein 1, found in Anopheles gambiae (African malaria mosquito).